The primary structure comprises 197 residues: Ribonuclease HII (197 aa).

An RNase H type-2 domain is found at 4–197 (IWVCGVDEAG…VRKALESVAS (194 aa)). A divalent metal cation contacts are provided by aspartate 10, glutamate 11, and aspartate 106.

Belongs to the RNase HII family. Requires Mn(2+) as cofactor. It depends on Mg(2+) as a cofactor.

It localises to the cytoplasm. The enzyme catalyses Endonucleolytic cleavage to 5'-phosphomonoester.. Its function is as follows. Endonuclease that specifically degrades the RNA of RNA-DNA hybrids. The protein is Ribonuclease HII of Polynucleobacter necessarius subsp. necessarius (strain STIR1).